The chain runs to 117 residues: Large ribosomal subunit protein uL22 (117 aa).

Belongs to the universal ribosomal protein uL22 family. Part of the 50S ribosomal subunit.

This protein binds specifically to 23S rRNA; its binding is stimulated by other ribosomal proteins, e.g. L4, L17, and L20. It is important during the early stages of 50S assembly. It makes multiple contacts with different domains of the 23S rRNA in the assembled 50S subunit and ribosome. Its function is as follows. The globular domain of the protein is located near the polypeptide exit tunnel on the outside of the subunit, while an extended beta-hairpin is found that lines the wall of the exit tunnel in the center of the 70S ribosome. This is Large ribosomal subunit protein uL22 from Lactobacillus helveticus (strain DPC 4571).